A 308-amino-acid polypeptide reads, in one-letter code: Uridylate cyclase (308 aa).

The Mn(2+) site is built by Asp62 and Asp106.

Belongs to the adenylyl cyclase class-4/guanylyl cyclase family. Pyrimidine cyclase subfamily. As to quaternary structure, homodimer. Requires Mn(2+) as cofactor.

It is found in the cytoplasm. The enzyme catalyses GTP = 3',5'-cyclic GMP + diphosphate. The catalysed reaction is UTP = 3',5'-cyclic UMP + diphosphate. Pycsar (pyrimidine cyclase system for antiphage resistance) provides immunity against bacteriophage. The pyrimidine cyclase (PycC) synthesizes cyclic nucleotides in response to infection; these serve as specific second messenger signals. The signals activate the adjacent effector, leading to bacterial cell death and abortive phage infection. A clade D Pycsar system. Its function is as follows. The pyrimidine cyclase gene of a two-gene Pycsar system, generates cyclic UMP (cUMP) from UTP as well as cGMP from GTP to a lesser extent, has little to no activity on ATP or CTP. Expression of this and adjacent effector PtPycTM (AC A0A4Q9KQH5) probably confers resistance to bacteriophage. The genes are probably only expressed in response to bacteriophage infection. This is Uridylate cyclase from Propioniciclava tarda.